The sequence spans 476 residues: Cytochrome P450 6B5 (476 aa).

Position 443 (C443) interacts with heme.

It belongs to the cytochrome P450 family. The cofactor is heme.

Its subcellular location is the endoplasmic reticulum membrane. It localises to the microsome membrane. It carries out the reaction an organic molecule + reduced [NADPH--hemoprotein reductase] + O2 = an alcohol + oxidized [NADPH--hemoprotein reductase] + H2O + H(+). In terms of biological role, enables the insect to feed on furanocoumarin-producing plants and evolved as an adaptation for detoxification of xanthotoxin and other furanocoumarins. The chain is Cytochrome P450 6B5 (CYP6B5) from Papilio glaucus (Eastern tiger swallowtail butterfly).